The chain runs to 367 residues: UDP-D-xylose:L-fucose alpha-1,3-D-xylosyltransferase (367 aa).

A compositionally biased stretch (polar residues) spans 1–10; sequence MAQKQQTLHQ. The tract at residues 1–21 is disordered; that stretch reads MAQKQQTLHQQRPFSSSPRSY. The Cytoplasmic segment spans residues 1-35; that stretch reads MAQKQQTLHQQRPFSSSPRSYSSISNRPIFLLSRN. The segment covering 12–21 has biased composition (low complexity); it reads RPFSSSPRSY. Residues 36-56 traverse the membrane as a helical; Signal-anchor for type II membrane protein segment; sequence GLLLVLLALFLLLGVFLPWPG. Over 57–367 the chain is Lumenal; it reads SPLLLFPNKV…ALESPLGKLQ (311 aa). Asn85, Asn98, and Asn173 each carry an N-linked (GlcNAc...) asparagine glycan. Positions 196–198 match the DXD motif motif; the sequence is DVD. Residues Asn228 and Asn292 are each glycosylated (N-linked (GlcNAc...) asparagine).

The protein belongs to the glycosyltransferase 77 family. Mn(2+) serves as cofactor. It depends on Mg(2+) as a cofactor. Glycosylated. As to expression, expressed in roots, rosette leaves, stems and flowers.

It localises to the golgi apparatus membrane. Functionally, catalyzes the transfer of D-xylose from UDP-alpha-D-xylose onto L-fucose. Probably involved in the biosynthesis of rhamnogalacturonan II (RG-II) through xylosylation of the internal fucose moiety of the A-chain of RG-II, a structurally complex pectic polysaccharide of the primary cell wall. RG-II is essential for the cell wall integrity of rapidly growing tissues such as roots and pollen tube growth and elongation. The sequence is that of UDP-D-xylose:L-fucose alpha-1,3-D-xylosyltransferase from Arabidopsis thaliana (Mouse-ear cress).